A 306-amino-acid polypeptide reads, in one-letter code: Acyl transferase (306 aa).

Residues Ser-117, Asp-214, and His-244 each act as charge relay system in the active site.

The protein belongs to the LuxD family.

The protein operates within lipid metabolism; fatty acid reduction for biolumincescence. In terms of biological role, acyl transferase is part of the fatty acid reductase system required for aldehyde biosynthesis; it produces fatty acids for the luminescent reaction. The chain is Acyl transferase from Photobacterium phosphoreum.